The following is a 431-amino-acid chain: Teosinte glume architecture 1 (431 aa).

2 disordered regions span residues 18–55 and 68–102; these read QDHA…GAPA and ECEP…QQCP. Residues 21-41 show a composition bias toward low complexity; sequence AAAAPSSGGHAANAAAAGTGT. The segment at 101–178 adopts an SBP-type zinc-finger fold; sequence CPSCAVDGCR…DGHNRRRRKP (78 aa). Zn(2+)-binding residues include Cys104, Cys109, Cys126, His129, Cys145, Cys148, His152, and Cys164. Residues 408 to 419 are compositionally biased toward gly residues; sequence GGGSGGGEGSSD. Residues 408 to 431 form a disordered region; that stretch reads GGGSGGGEGSSDGGTSSSMPFSWQ.

Monomer and homodimer. As to expression, strongly expressed in immature ears and weakly in husks. Found in the inflorescence meristem of the developing ear, in the spikelet pair primordia, the glume primordia, the cupule forming region and other floral organs. Not detected in other tissues.

SBP transcriptional regulator probably involved in the domestication of maize. Acts as a transcriptional repressor binding to a 5'-GTAC-3' motif. May repress the growth of lateral branches in length and numbers. This is Teosinte glume architecture 1 from Zea mays (Maize).